The following is a 1478-amino-acid chain: Zinc finger protein 518A (1478 aa).

4 consecutive C2H2-type zinc fingers follow at residues 152–174 (FPCE…RKTH), 209–231 (FQCE…IHRH), 236–258 (YKCG…LRVH), and 264–287 (FTCH…ITLH). The segment at 355 to 394 (TQTKSEDQSQEQLNEEKGGRQHCEDGDKPIESGSEKATVL) is disordered. Lysine 358 is covalently cross-linked (Glycyl lysine isopeptide (Lys-Gly) (interchain with G-Cter in SUMO2)). A compositionally biased stretch (basic and acidic residues) spans 368-388 (NEEKGGRQHCEDGDKPIESGS). Glycyl lysine isopeptide (Lys-Gly) (interchain with G-Cter in SUMO2) cross-links involve residues lysine 390 and lysine 428. The tract at residues 464 to 484 (PSPALQPNTEKESTANLPPQA) is disordered. Lysine 518 participates in a covalent cross-link: Glycyl lysine isopeptide (Lys-Gly) (interchain with G-Cter in SUMO2). Position 652 is a phosphoserine (serine 652). The disordered stretch occupies residues 656–694 (VCENLQRESSNKTVTQQSTSDSDTTSPLRKESSNSDSLL). Low complexity predominate over residues 670 to 681 (TQQSTSDSDTTS). Residues lysine 707, lysine 792, lysine 882, lysine 895, lysine 987, lysine 1008, lysine 1041, lysine 1055, lysine 1078, lysine 1180, and lysine 1441 each participate in a glycyl lysine isopeptide (Lys-Gly) (interchain with G-Cter in SUMO2) cross-link. The C2H2-type 5 zinc finger occupies 1444–1466 (FNCWFCGRVFDNQDVWAGHGQRH).

Belongs to the krueppel C2H2-type zinc-finger protein family.

It localises to the nucleus. Through its association with the EHMT1-EHMT2/G9A and PRC2/EED-EZH2 histone methyltransferase complexes may function in gene silencing, regulating repressive post-translational methylation of histone tails at promoters of target genes. This is Zinc finger protein 518A (Znf518a) from Rattus norvegicus (Rat).